The primary structure comprises 1212 residues: Solute carrier family 12 member 2 (1212 aa).

N-acetylmethionine is present on M1. Topologically, residues 1 to 286 (MEPRPTAPSS…AESKGVVKFG (286 aa)) are cytoplasmic. Disordered stretches follow at residues 36–81 (GTAV…QSRF), 112–138 (GAKQ…AKGR), and 150–193 (SSAE…GGGS). Phosphoserine is present on residues S77 and S79. Residues 80–83 (RFQV) carry the RFXV motif 1 motif. Over residues 127 to 137 (EPAKGSEEAKG) the composition is skewed to basic and acidic residues. Positions 138-141 (RFRV) match the RFXV motif 2 motif. The span at 150-160 (SSAEDSLSDAA) shows a compositional bias: low complexity. Phosphothreonine; by OXSR1 and STK39 is present on residues T203, T207, and T212. Phosphothreonine is present on residues T217 and T230. The residue at position 242 (S242) is a Phosphoserine. T266 carries the post-translational modification Phosphothreonine. The chain crosses the membrane as a discontinuously helical span at residues 287-316 (WIKGVLVRCMLNIWGVMLFIRLSWIVGQAG). L297 contributes to the Na(+) binding site. Positions 298 and 299 each coordinate K(+). W300 is a Na(+) binding site. Positions 301, 302, and 303 each coordinate chloride. A helical transmembrane segment spans residues 317–336 (IGLSVLVIMMATVVTTITGL). The Cytoplasmic portion of the chain corresponds to 337 to 367 (STSAIATNGFVRGGGAYYLISRSLGPEFGGA). The chain crosses the membrane as a helical span at residues 368–395 (IGLIFAFANAVAVAMYVVGFAETVVELL). A chloride-binding site is contributed by F372. K(+) is bound at residue Y383. At 396 to 405 (KEHSILMIDE) the chain is on the extracellular side. A helical transmembrane segment spans residues 406 to 429 (INDIRIIGAITVVILLGISVAGME). Over 430–432 (WEA) the chain is Cytoplasmic. A helical membrane pass occupies residues 433 to 454 (KAQIVLLVILLLAIGDFVIGTF). The Extracellular portion of the chain corresponds to 455 to 486 (IPLESKKPKGFFGYKSEIFNENFGPDFREEET). The chain crosses the membrane as a discontinuously helical span at residues 487–504 (FFSVFAIFFPAATGILAG). Positions 496, 497, and 499 each coordinate K(+). Positions 496 and 497 each coordinate chloride. Positions 500 and 501 each coordinate chloride. The Cytoplasmic segment spans residues 505-519 (ANISGDLADPQSAIP). The helical transmembrane segment at 520–541 (KGTLLAILITTLVYVGIAVSVG) threads the bilayer. The Extracellular portion of the chain corresponds to 542–598 (SCVVRDATGNVNDTIVTELTNCTSAACKLNFDFSSCESSPCSYGLMNNFQVMSMVSG). Residues N553 and N562 are each glycosylated (N-linked (GlcNAc...) asparagine). 2 cysteine pairs are disulfide-bonded: C563-C568 and C577-C582. A helical membrane pass occupies residues 599-623 (FTPLISAGIFSATLSSALASLVSAP). Na(+) contacts are provided by A610, S613, and S614. The Cytoplasmic portion of the chain corresponds to 624 to 651 (KIFQALCKDNIYPAFQMFAKGYGKNNEP). Helical transmembrane passes span 652–672 (LRGY…AELN) and 673–691 (VIAP…LINF). F682 and Y686 together coordinate chloride. The Cytoplasmic portion of the chain corresponds to 692 to 714 (SVFHASLAKSPGWRPAFKYYNMW). A run of 2 helical transmembrane segments spans residues 715–732 (ISLL…VINW) and 733–745 (WAAL…VLGL). The Cytoplasmic segment spans residues 746 to 1212 (YIYVTYKKPD…NHQSVLTFYS (467 aa)). Residues 761–778 (STQALTYLNALQHSIRLS) form a scissor helix region. Residues S940 and S944 each carry the phosphoserine modification. Positions 962–978 (LDTSKPLSEKPITHKVE) are enriched in basic and acidic residues. A disordered region spans residues 962-989 (LDTSKPLSEKPITHKVEEEDGKTATQPL). S994 is subject to Phosphoserine.

The protein belongs to the SLC12A transporter family. Homodimer; adopts a domain-swap conformation at the scissor helices connecting the transmembrane domain and C-terminal domain. Phosphorylated at Thr-203, Thr-207 and Thr-212 by OXSR1/OSR1 and STK39/SPAK downstream of WNK kinases (WNK1, WNK2, WNK3 or WNK4), promoting its activity. In terms of tissue distribution, expressed in many tissues.

It localises to the basolateral cell membrane. The enzyme catalyses K(+)(out) + 2 chloride(out) + Na(+)(out) = K(+)(in) + 2 chloride(in) + Na(+)(in). Activated following phosphorylation by OXSR1/OSR1 and STK39/SPAK downstream of WNK kinases (WNK1, WNK2, WNK3 or WNK4). Inhibited by bumetanide. Inhibited by furosemide. Functionally, cation-chloride cotransporter which mediates the electroneutral transport of chloride, potassium and/or sodium ions across the membrane. Plays a vital role in the regulation of ionic balance and cell volume. The polypeptide is Solute carrier family 12 member 2 (SLC12A2) (Homo sapiens (Human)).